The primary structure comprises 354 residues: Phosphatidylserine decarboxylase proenzyme (354 aa).

The helical transmembrane segment at 18–36 threads the bilayer; sequence YLITGVTILSFILMFQYKY. Active-site charge relay system; for autoendoproteolytic cleavage activity residues include Asp-139, His-198, and Ser-308. Ser-308 (schiff-base intermediate with substrate; via pyruvic acid; for decarboxylase activity) is an active-site residue. Ser-308 carries the pyruvic acid (Ser); by autocatalysis modification.

The protein belongs to the phosphatidylserine decarboxylase family. PSD-B subfamily. Eukaryotic type I sub-subfamily. As to quaternary structure, heterodimer of a large membrane-associated beta subunit and a small pyruvoyl-containing alpha subunit. Pyruvate is required as a cofactor. Post-translationally, is synthesized initially as an inactive proenzyme. Formation of the active enzyme involves a self-maturation process in which the active site pyruvoyl group is generated from an internal serine residue via an autocatalytic post-translational modification. Two non-identical subunits are generated from the proenzyme in this reaction, and the pyruvate is formed at the N-terminus of the alpha chain, which is derived from the carboxyl end of the proenzyme. The autoendoproteolytic cleavage occurs by a canonical serine protease mechanism, in which the side chain hydroxyl group of the serine supplies its oxygen atom to form the C-terminus of the beta chain, while the remainder of the serine residue undergoes an oxidative deamination to produce ammonia and the pyruvoyl prosthetic group on the alpha chain. During this reaction, the Ser that is part of the protease active site of the proenzyme becomes the pyruvoyl prosthetic group, which constitutes an essential element of the active site of the mature decarboxylase.

The protein resides in the membrane. Its subcellular location is the endoplasmic reticulum membrane. It catalyses the reaction a 1,2-diacyl-sn-glycero-3-phospho-L-serine + H(+) = a 1,2-diacyl-sn-glycero-3-phosphoethanolamine + CO2. Its pathway is phospholipid metabolism; phosphatidylethanolamine biosynthesis; phosphatidylethanolamine from CDP-diacylglycerol: step 2/2. With respect to regulation, protease activity is inhibited by PMSF. Functionally, catalyzes the formation of phosphatidylethanolamine (PtdEtn) from phosphatidylserine (PtdSer). Plays a central role in phospholipid metabolism and in the interorganelle trafficking of phosphatidylserine. This chain is Phosphatidylserine decarboxylase proenzyme, found in Plasmodium knowlesi (strain H).